A 117-amino-acid chain; its full sequence is Large ribosomal subunit protein bL17 (117 aa).

It belongs to the bacterial ribosomal protein bL17 family. Part of the 50S ribosomal subunit. Contacts protein L32.

The protein is Large ribosomal subunit protein bL17 of Endomicrobium trichonymphae.